The sequence spans 232 residues: 2-C-methyl-D-erythritol 4-phosphate cytidylyltransferase (232 aa).

Belongs to the IspD/TarI cytidylyltransferase family. IspD subfamily.

The catalysed reaction is 2-C-methyl-D-erythritol 4-phosphate + CTP + H(+) = 4-CDP-2-C-methyl-D-erythritol + diphosphate. It participates in isoprenoid biosynthesis; isopentenyl diphosphate biosynthesis via DXP pathway; isopentenyl diphosphate from 1-deoxy-D-xylulose 5-phosphate: step 2/6. Catalyzes the formation of 4-diphosphocytidyl-2-C-methyl-D-erythritol from CTP and 2-C-methyl-D-erythritol 4-phosphate (MEP). This Synechococcus elongatus (strain ATCC 33912 / PCC 7942 / FACHB-805) (Anacystis nidulans R2) protein is 2-C-methyl-D-erythritol 4-phosphate cytidylyltransferase.